Reading from the N-terminus, the 98-residue chain is C-X-C motif chemokine 10 (98 aa).

Residues Met-1–Gly-21 form the signal peptide. Arg-26 carries the post-translational modification Citrulline. Disulfide bonds link Cys-30–Cys-57 and Cys-32–Cys-74.

This sequence belongs to the intercrine alpha (chemokine CxC) family. As to quaternary structure, monomer, dimer, and tetramer. Interacts with CXCR3 (via N-terminus). In terms of tissue distribution, in the central nervous system, CXCL10 is predominantly localized to activated neurons. Expressed in both microglia and astrocytes.

It is found in the secreted. In terms of biological role, pro-inflammatory cytokine that is involved in a wide variety of processes such as chemotaxis, differentiation, and activation of peripheral immune cells, regulation of cell growth, apoptosis and modulation of angiostatic effects. Plays thereby an important role during viral infections by stimulating the activation and migration of immune cells to the infected sites. Mechanistically, binding of CXCL10 to the CXCR3 receptor activates G protein-mediated signaling and results in downstream activation of phospholipase C-dependent pathway, an increase in intracellular calcium production and actin reorganization. In turn, recruitment of activated Th1 lymphocytes occurs at sites of inflammation. Activation of the CXCL10/CXCR3 axis also plays an important role in neurons in response to brain injury for activating microglia, the resident macrophage population of the central nervous system, and directing them to the lesion site. This recruitment is an essential element for neuronal reorganization. This Rattus norvegicus (Rat) protein is C-X-C motif chemokine 10 (Cxcl10).